The sequence spans 379 residues: Cobalt-precorrin-5B C(1)-methyltransferase (379 aa).

It belongs to the CbiD family.

It carries out the reaction Co-precorrin-5B + S-adenosyl-L-methionine = Co-precorrin-6A + S-adenosyl-L-homocysteine. The protein operates within cofactor biosynthesis; adenosylcobalamin biosynthesis; cob(II)yrinate a,c-diamide from sirohydrochlorin (anaerobic route): step 6/10. In terms of biological role, catalyzes the methylation of C-1 in cobalt-precorrin-5B to form cobalt-precorrin-6A. This Salmonella schwarzengrund (strain CVM19633) protein is Cobalt-precorrin-5B C(1)-methyltransferase.